The primary structure comprises 224 residues: Probable proteasome subunit beta type-4 (224 aa).

This sequence belongs to the peptidase T1B family. In terms of assembly, the 26S proteasome consists of a 20S proteasome core and two 19S regulatory subunits. The 20S proteasome core is composed of 28 subunits that are arranged in four stacked rings, resulting in a barrel-shaped structure. The two end rings are each formed by seven alpha subunits, and the two central rings are each formed by seven beta subunits. The catalytic chamber with the active sites is on the inside of the barrel.

It localises to the cytoplasm. It is found in the nucleus. Its function is as follows. Non-catalytic component of the proteasome, a multicatalytic proteinase complex which is characterized by its ability to cleave peptides with Arg, Phe, Tyr, Leu, and Glu adjacent to the leaving group at neutral or slightly basic pH. The proteasome has an ATP-dependent proteolytic activity. This chain is Probable proteasome subunit beta type-4 (CPR1), found in Cryptococcus neoformans var. neoformans serotype D (strain B-3501A) (Filobasidiella neoformans).